A 115-amino-acid chain; its full sequence is Large ribosomal subunit protein uL24 (115 aa).

Residues 49–68 (NMKTKHHPPSKDQEKGSITK) are disordered.

The protein belongs to the universal ribosomal protein uL24 family. As to quaternary structure, part of the 50S ribosomal subunit.

One of two assembly initiator proteins, it binds directly to the 5'-end of the 23S rRNA, where it nucleates assembly of the 50S subunit. Its function is as follows. One of the proteins that surrounds the polypeptide exit tunnel on the outside of the subunit. This Phytoplasma australiense protein is Large ribosomal subunit protein uL24.